Reading from the N-terminus, the 684-residue chain is MTTTSDQNAAAPPRFDGLRALFINATLKRSPELSHTDGLIERSSGIMREHGVQVDTLRAVDHDIATGVWPDMTEHGWATDEWPALYRRVLDAHILVLCGPIWLGDNSSVMKRVIERLYACSSLLNEDGQYAYYGRAGGCLITGNEDGVKHCAMNVLYSLQHLGYTIPPQADAGWIGEAGPGPSYLDPGSGGPENDFTNRNTTFMTFNLMHIAQMLRAPAASRPTAINAPSGTPAAGRTSPTPTTDSQRRSRVARWLVAGEFRLLSHLCSRGSKVGELAQDTRTSLKTSWYLLGPAFVAAIAYVDPGNVAANVSSGAQFGYLLLWVIVAANVMAALVQYLSAKLGLVTGRSLPEAIGKRMGRPARLAYWAQAEIVAMATDVAEVIGGAIALRIMFNLPLPIGGIITGVVSLLLLTIQDRRGQRLFERVITALLLVIAIGFTASFFVVTPPPNAVLGGLAPRFQGTESVLLAAAIMGATVMPHAVYLHSGLARDRHGHPDPGPQRRRLLRVTRWDVGLAMLIAGGVNAAMLLVAALNMRGRGDTASIEGAYHAVHDTLGATIAVLFAVGLLASGLASSSVGAYAGAMIMQGLLHWSVPMLVRRLITLGPALAILTLGFDPTRTLVLSQVVLSFGIPFAVLPLVKLTGSPAVMGGDTNHRATTWVGWVVAVMVSLLNVMLIYLTVTG.

The disordered stretch occupies residues 223 to 250; that stretch reads PTAINAPSGTPAAGRTSPTPTTDSQRRS. The next 11 membrane-spanning stretches (helical) occupy residues 283-303, 318-340, 365-387, 391-413, 427-446, 467-489, 514-534, 555-577, 597-616, 621-643, and 656-678; these read TSLKTSWYLLGPAFVAAIAYV, FGYLLLWVIVAANVMAALVQYLS, LAYWAQAEIVAMATDVAEVIGGA, RIMFNLPLPIGGIITGVVSLLLL, VITALLLVIAIGFTASFFVV, VLLAAAIMGATVMPHAVYLHSGL, VGLAMLIAGGVNAAMLLVAAL, TLGATIAVLFAVGLLASGLASSS, MLVRRLITLGPALAILTLGF, TLVLSQVVLSFGIPFAVLPLVKL, and HRATTWVGWVVAVMVSLLNVMLI.

This sequence in the C-terminal section; belongs to the NRAMP family.

The protein resides in the cell membrane. Its function is as follows. H(+)-stimulated, divalent metal cation uptake system. The chain is Divalent metal cation transporter MntH (mntH) from Mycobacterium bovis (strain ATCC BAA-935 / AF2122/97).